The following is a 516-amino-acid chain: Adenine DNA glycosylase (516 aa).

Over residues 1-23 (MKKLRASVRSHKKQPANHKRRGK) the composition is skewed to basic residues. The disordered stretch occupies residues 1–38 (MKKLRASVRSHKKQPANHKRRGKCALSSSQAKPSGLDG). The active-site Proton donor/acceptor is Glu-105. 4 residues coordinate [4Fe-4S] cluster: Cys-261, Cys-268, Cys-271, and Cys-277. Positions 335 to 467 (PREEYSATCV…AMKKVFRVYE (133 aa)) constitute a Nudix hydrolase domain. Positions 376–398 (VTLEPSGQHQHKALLQELQHWSA) match the Nudix box motif. The interval 474-516 (CKGSKRPQVCTPSSRKKPSRGQQVLDRFFQRHIPTHKPNSTTQ) is disordered.

Belongs to the Nth/MutY family. It depends on [4Fe-4S] cluster as a cofactor. In terms of tissue distribution, expressed in brain, spleen, heart, liver and kidney.

Its subcellular location is the nucleus. It localises to the mitochondrion. The enzyme catalyses Hydrolyzes free adenine bases from 7,8-dihydro-8-oxoguanine:adenine mismatched double-stranded DNA, leaving an apurinic site.. Involved in oxidative DNA damage repair. Initiates repair of A*oxoG to C*G by removing the inappropriately paired adenine base from the DNA backbone. Possesses both adenine and 2-OH-A DNA glycosylase activities. The sequence is that of Adenine DNA glycosylase (Mutyh) from Rattus norvegicus (Rat).